Consider the following 215-residue polypeptide: Glycerol-3-phosphate acyltransferase (215 aa).

Helical transmembrane passes span 3–23 (LILL…LWIG), 42–61 (TNTF…LIDI), 68–90 (TLLP…FAVL), 110–130 (AGVL…VFVL), 134–154 (LFSM…ISVL), and 162–182 (LLPG…AIII).

Belongs to the PlsY family. As to quaternary structure, probably interacts with PlsX.

It is found in the cell membrane. The enzyme catalyses an acyl phosphate + sn-glycerol 3-phosphate = a 1-acyl-sn-glycero-3-phosphate + phosphate. It participates in lipid metabolism; phospholipid metabolism. Catalyzes the transfer of an acyl group from acyl-phosphate (acyl-PO(4)) to glycerol-3-phosphate (G3P) to form lysophosphatidic acid (LPA). This enzyme utilizes acyl-phosphate as fatty acyl donor, but not acyl-CoA or acyl-ACP. This Streptococcus equi subsp. zooepidemicus (strain H70) protein is Glycerol-3-phosphate acyltransferase.